Here is a 613-residue protein sequence, read N- to C-terminus: Na(+)/H(+) antiporter NhaA 1 (613 aa).

Residues 1–23 form a disordered region; it reads MTEASARTIGPLPSRFSRDPKTP. Residues 1–408 are na(+)/H(+) antiporter NhaA; that stretch reads MTEASARTIG…DPARQDEARV (408 aa). A run of 11 helical transmembrane segments spans residues 29-49, 81-101, 110-130, 138-158, 168-188, 191-211, 231-251, 300-320, 337-357, 377-397, and 408-428; these read AAAALLLAFTVLAILWANSPW, GLMAFFFFIVGLEVKSEFVIG, AVPVVAAIAGLIVPAVIFLTF, QAWGVVISTDTAFLVGALAVI, IFLLTLAVVDDVGALGAIALF, DDLKLAPLAVAALLIAALAMV, IALYLAHVHPTLAGVAVAVLI, AVGPYVSFVVLPIFALANAGV, WGIVAGLVVGKFVGITAATAL, GGAALSGIGFTISLFIVDVAI, and VGVLIASVLAFTLSWALFRIT. Residues 409-613 enclose the Thioredoxin domain; it reads GVLIASVLAF…SLIRALEAGR (205 aa).

It in the N-terminal section; belongs to the NhaA Na(+)/H(+) (TC 2.A.33) antiporter family.

The protein resides in the cell membrane. The catalysed reaction is Na(+)(in) + 2 H(+)(out) = Na(+)(out) + 2 H(+)(in). Functionally, na(+)/H(+) antiporter that extrudes sodium in exchange for external protons. In Mycobacterium sp. (strain KMS), this protein is Na(+)/H(+) antiporter NhaA 1.